We begin with the raw amino-acid sequence, 540 residues long: 2-isopropylmalate synthase (540 aa).

One can recognise a Pyruvate carboxyltransferase domain in the interval 8 to 269; the sequence is VLIFDTTLRD…YFNPFFGREP (262 aa). Mn(2+) is bound by residues D17, H208, H210, and N244. The tract at residues 408–540 is regulatory domain; it reads QLRLVQVSCG…AVLADLRSGI (133 aa).

It belongs to the alpha-IPM synthase/homocitrate synthase family. LeuA type 1 subfamily. As to quaternary structure, homodimer. Requires Mn(2+) as cofactor.

The protein localises to the cytoplasm. The catalysed reaction is 3-methyl-2-oxobutanoate + acetyl-CoA + H2O = (2S)-2-isopropylmalate + CoA + H(+). Its pathway is amino-acid biosynthesis; L-leucine biosynthesis; L-leucine from 3-methyl-2-oxobutanoate: step 1/4. In terms of biological role, catalyzes the condensation of the acetyl group of acetyl-CoA with 3-methyl-2-oxobutanoate (2-ketoisovalerate) to form 3-carboxy-3-hydroxy-4-methylpentanoate (2-isopropylmalate). This is 2-isopropylmalate synthase from Prochlorococcus marinus (strain MIT 9313).